We begin with the raw amino-acid sequence, 209 residues long: Uracil phosphoribosyltransferase (209 aa).

Residues R79, R104, and 131-139 each bind 5-phospho-alpha-D-ribose 1-diphosphate; that span reads DPMLATGGS. Uracil is bound by residues I194 and 199–201; that span reads GDA. D200 contacts 5-phospho-alpha-D-ribose 1-diphosphate.

Belongs to the UPRTase family. Mg(2+) serves as cofactor.

It carries out the reaction UMP + diphosphate = 5-phospho-alpha-D-ribose 1-diphosphate + uracil. It participates in pyrimidine metabolism; UMP biosynthesis via salvage pathway; UMP from uracil: step 1/1. Its activity is regulated as follows. Allosterically activated by GTP. In terms of biological role, catalyzes the conversion of uracil and 5-phospho-alpha-D-ribose 1-diphosphate (PRPP) to UMP and diphosphate. This chain is Uracil phosphoribosyltransferase, found in Alkaliphilus metalliredigens (strain QYMF).